The primary structure comprises 560 residues: Glucose-6-phosphate isomerase, cytosolic (560 aa).

Ala-2 bears the N-acetylalanine mark. Glu-361 acts as the Proton donor in catalysis. Residues His-392 and Lys-517 contribute to the active site.

Belongs to the GPI family. In terms of assembly, homodimer.

Its subcellular location is the cytoplasm. The enzyme catalyses alpha-D-glucose 6-phosphate = beta-D-fructose 6-phosphate. It functions in the pathway carbohydrate degradation; glycolysis; D-glyceraldehyde 3-phosphate and glycerone phosphate from D-glucose: step 2/4. In Arabidopsis lyrata subsp. petraea (Northern rock-cress), this protein is Glucose-6-phosphate isomerase, cytosolic (PGIC).